The sequence spans 110 residues: Phosphoribosyl-ATP pyrophosphatase (110 aa).

Belongs to the PRA-PH family.

It is found in the cytoplasm. The catalysed reaction is 1-(5-phospho-beta-D-ribosyl)-ATP + H2O = 1-(5-phospho-beta-D-ribosyl)-5'-AMP + diphosphate + H(+). Its pathway is amino-acid biosynthesis; L-histidine biosynthesis; L-histidine from 5-phospho-alpha-D-ribose 1-diphosphate: step 2/9. The protein is Phosphoribosyl-ATP pyrophosphatase of Pseudomonas fluorescens (strain SBW25).